Consider the following 529-residue polypeptide: All-trans-zeta-carotene desaturase (529 aa).

12–45 (IVVGAGPGGLSAAINLAGQGFRVTVVEKDAVPGG) lines the FAD pocket.

Belongs to the carotenoid/retinoid oxidoreductase family. The cofactor is FAD.

It catalyses the reaction all-trans-zeta-carotene + 2 A = all-trans-lycopene + 2 AH2. The protein operates within carotenoid biosynthesis; lycopene biosynthesis. Its function is as follows. Dehydrogenates carotenes in the trans conformation: converts all-trans-zeta-carotene into all-trans-lycopene, one of the last dehydrogenation steps of lycopene biosynthesis. This chain is All-trans-zeta-carotene desaturase (carC), found in Myxococcus xanthus.